The following is a 308-amino-acid chain: Aspartate carbamoyltransferase catalytic subunit (308 aa).

Carbamoyl phosphate-binding residues include R59 and T60. K87 is an L-aspartate binding site. Positions 109, 139, and 142 each coordinate carbamoyl phosphate. L-aspartate contacts are provided by R172 and R224. Carbamoyl phosphate-binding residues include A265 and P266.

It belongs to the aspartate/ornithine carbamoyltransferase superfamily. ATCase family. In terms of assembly, heterododecamer (2C3:3R2) of six catalytic PyrB chains organized as two trimers (C3), and six regulatory PyrI chains organized as three dimers (R2).

The enzyme catalyses carbamoyl phosphate + L-aspartate = N-carbamoyl-L-aspartate + phosphate + H(+). The protein operates within pyrimidine metabolism; UMP biosynthesis via de novo pathway; (S)-dihydroorotate from bicarbonate: step 2/3. Functionally, catalyzes the condensation of carbamoyl phosphate and aspartate to form carbamoyl aspartate and inorganic phosphate, the committed step in the de novo pyrimidine nucleotide biosynthesis pathway. This Streptococcus mutans serotype c (strain ATCC 700610 / UA159) protein is Aspartate carbamoyltransferase catalytic subunit.